The chain runs to 175 residues: Crossover junction endodeoxyribonuclease RuvC (175 aa).

Residues Asp-12, Glu-72, and Asp-144 contribute to the active site. Positions 12, 72, and 144 each coordinate Mg(2+).

The protein belongs to the RuvC family. Homodimer which binds Holliday junction (HJ) DNA. The HJ becomes 2-fold symmetrical on binding to RuvC with unstacked arms; it has a different conformation from HJ DNA in complex with RuvA. In the full resolvosome a probable DNA-RuvA(4)-RuvB(12)-RuvC(2) complex forms which resolves the HJ. Mg(2+) is required as a cofactor.

It is found in the cytoplasm. It carries out the reaction Endonucleolytic cleavage at a junction such as a reciprocal single-stranded crossover between two homologous DNA duplexes (Holliday junction).. The RuvA-RuvB-RuvC complex processes Holliday junction (HJ) DNA during genetic recombination and DNA repair. Endonuclease that resolves HJ intermediates. Cleaves cruciform DNA by making single-stranded nicks across the HJ at symmetrical positions within the homologous arms, yielding a 5'-phosphate and a 3'-hydroxyl group; requires a central core of homology in the junction. The consensus cleavage sequence is 5'-(A/T)TT(C/G)-3'. Cleavage occurs on the 3'-side of the TT dinucleotide at the point of strand exchange. HJ branch migration catalyzed by RuvA-RuvB allows RuvC to scan DNA until it finds its consensus sequence, where it cleaves and resolves the cruciform DNA. The protein is Crossover junction endodeoxyribonuclease RuvC of Beijerinckia indica subsp. indica (strain ATCC 9039 / DSM 1715 / NCIMB 8712).